The primary structure comprises 198 residues: Superoxide dismutase [Fe] (198 aa).

The Fe cation site is built by H27, H74, D158, and H162.

Belongs to the iron/manganese superoxide dismutase family. As to quaternary structure, homodimer. Fe cation serves as cofactor.

Its subcellular location is the cytoplasm. The enzyme catalyses 2 superoxide + 2 H(+) = H2O2 + O2. Functionally, destroys superoxide anion radicals which are normally produced within the cells and which are toxic to biological systems. The polypeptide is Superoxide dismutase [Fe] (SODB) (Plasmodium malariae).